Consider the following 292-residue polypeptide: tRNA dimethylallyltransferase (292 aa).

Residue 5–12 coordinates ATP; sequence APTGAGKT. Residue 7 to 12 coordinates substrate; the sequence is TGAGKT. The interval 29-32 is interaction with substrate tRNA; it reads DSRQ.

Belongs to the IPP transferase family. As to quaternary structure, monomer. It depends on Mg(2+) as a cofactor.

The enzyme catalyses adenosine(37) in tRNA + dimethylallyl diphosphate = N(6)-dimethylallyladenosine(37) in tRNA + diphosphate. Catalyzes the transfer of a dimethylallyl group onto the adenine at position 37 in tRNAs that read codons beginning with uridine, leading to the formation of N6-(dimethylallyl)adenosine (i(6)A). The chain is tRNA dimethylallyltransferase from Leptospira borgpetersenii serovar Hardjo-bovis (strain JB197).